Here is a 237-residue protein sequence, read N- to C-terminus: CD63 antigen (237 aa).

Over 1 to 11 the chain is Cytoplasmic; that stretch reads MAVEGGMKCVK. The chain crosses the membrane as a helical span at residues 12-32; the sequence is FLLYVLLLVFCACAVGLIAVG. Over 33–51 the chain is Extracellular; sequence VGTHLVLNQTITHGATPSF. The N-linked (GlcNAc...) asparagine glycan is linked to Asn40. The chain crosses the membrane as a helical span at residues 52 to 72; the sequence is LLPVVIIAVGAFLFLVAFVGC. Topologically, residues 73–81 are cytoplasmic; the sequence is CGACKENYC. Residues 82–102 form a helical membrane-spanning segment; that stretch reads LMITFAIFLSLIMLVEVAAAI. At 103-202 the chain is on the extracellular side; the sequence is AGYVFRDKVR…KIAAWLRKNV (100 aa). Asn130, Asn150, and Asn171 each carry an N-linked (GlcNAc...) asparagine glycan. A helical transmembrane segment spans residues 203-223; the sequence is LVVAAAALGIAFVEILGIVLA. Over 224–237 the chain is Cytoplasmic; the sequence is CCLVKSIRSGYEVM. The short motif at 233 to 237 is the Lysosomal targeting motif element; it reads GYEVM.

This sequence belongs to the tetraspanin (TM4SF) family. In terms of assembly, interacts with TIMP1 and ITGB1 and recruits TIMP1 to ITGB1. Interacts with CD9. Identified in a complex with CD9 and ITGB3. Interacts with PMEL. Interacts with KDR/VEGFR2; identified in a complex with ITGB1 and KDR/VEGFR2 and is required to recruit KDR to ITGB1 complexes. Interacts with SYT7. Palmitoylated at a low, basal level in unstimulated platelets. The level of palmitoylation increases when platelets are activated by thrombin (in vitro).

The protein resides in the cell membrane. It localises to the lysosome membrane. The protein localises to the late endosome membrane. Its subcellular location is the endosome. It is found in the multivesicular body. The protein resides in the melanosome. It localises to the secreted. The protein localises to the extracellular exosome. Its subcellular location is the cell surface. Functions as a cell surface receptor for TIMP1 and plays a role in the activation of cellular signaling cascades. Plays a role in the activation of ITGB1 and integrin signaling, leading to the activation of AKT, FAK/PTK2 and MAP kinases. Promotes cell survival, reorganization of the actin cytoskeleton, cell adhesion, spreading and migration, via its role in the activation of AKT and FAK/PTK2. Plays a role in VEGFA signaling via its role in regulating the internalization of KDR/VEGFR2. Plays a role in intracellular vesicular transport processes, and is required for normal trafficking of the PMEL luminal domain that is essential for the development and maturation of melanocytes. Plays a role in the adhesion of leukocytes onto endothelial cells via its role in the regulation of SELP trafficking. May play a role in mast cell degranulation in response to Ms4a2/FceRI stimulation, but not in mast cell degranulation in response to other stimuli. The sequence is that of CD63 antigen (CD63) from Bos taurus (Bovine).